The primary structure comprises 299 residues: Ethylmalonyl-CoA decarboxylase (299 aa).

An N6-acetyllysine; alternate modification is found at lysine 209. At lysine 209 the chain carries N6-succinyllysine; alternate. Lysine 293 bears the N6-succinyllysine mark.

Belongs to the enoyl-CoA hydratase/isomerase family.

It is found in the cytoplasm. The protein localises to the cytosol. It carries out the reaction (2S)-ethylmalonyl-CoA + H(+) = butanoyl-CoA + CO2. It catalyses the reaction (S)-methylmalonyl-CoA + H(+) = propanoyl-CoA + CO2. The catalysed reaction is (2R)-ethylmalonyl-CoA + H(+) = butanoyl-CoA + CO2. Its function is as follows. Decarboxylates ethylmalonyl-CoA, a potentially toxic metabolite, to form butyryl-CoA, suggesting it might be involved in metabolite proofreading. Acts preferentially on (S)-ethylmalonyl-CoA but also has some activity on the (R)-isomer. Also has methylmalonyl-CoA decarboxylase activity at lower level. The protein is Ethylmalonyl-CoA decarboxylase (Echdc1) of Rattus norvegicus (Rat).